The sequence spans 99 residues: Aspartyl/glutamyl-tRNA(Asn/Gln) amidotransferase subunit C (99 aa).

This sequence belongs to the GatC family. As to quaternary structure, heterotrimer of A, B and C subunits.

The enzyme catalyses L-glutamyl-tRNA(Gln) + L-glutamine + ATP + H2O = L-glutaminyl-tRNA(Gln) + L-glutamate + ADP + phosphate + H(+). It catalyses the reaction L-aspartyl-tRNA(Asn) + L-glutamine + ATP + H2O = L-asparaginyl-tRNA(Asn) + L-glutamate + ADP + phosphate + 2 H(+). Its function is as follows. Allows the formation of correctly charged Asn-tRNA(Asn) or Gln-tRNA(Gln) through the transamidation of misacylated Asp-tRNA(Asn) or Glu-tRNA(Gln) in organisms which lack either or both of asparaginyl-tRNA or glutaminyl-tRNA synthetases. The reaction takes place in the presence of glutamine and ATP through an activated phospho-Asp-tRNA(Asn) or phospho-Glu-tRNA(Gln). This is Aspartyl/glutamyl-tRNA(Asn/Gln) amidotransferase subunit C from Delftia acidovorans (strain DSM 14801 / SPH-1).